Reading from the N-terminus, the 226-residue chain is 6-carboxyhexanoate--CoA ligase (226 aa).

It belongs to the BioW family. Homodimer. Mg(2+) serves as cofactor.

It carries out the reaction heptanedioate + ATP + CoA = 6-carboxyhexanoyl-CoA + AMP + diphosphate. Its pathway is metabolic intermediate metabolism; pimeloyl-CoA biosynthesis; pimeloyl-CoA from pimelate: step 1/1. In terms of biological role, catalyzes the transformation of pimelate into pimeloyl-CoA with concomitant hydrolysis of ATP to AMP. The polypeptide is 6-carboxyhexanoate--CoA ligase (Methanocaldococcus infernus (strain DSM 11812 / JCM 15783 / ME)).